Reading from the N-terminus, the 267-residue chain is REH2-associated factor 2 (267 aa).

In terms of assembly, component of the REH2-associated complex (REH2C) composed of helicase REH2, associated factors H2F1 and H2F2, and mRNAs at various editing stages; the formation of the complex is RNA-independent. Interacts with various editing complexes including the RNA editing core (RECC) complex, the gRNA-binding (GRBC) complex (also known as the MRB1 complex) and the RNA editing mediator (REMC) complex.

Its subcellular location is the mitochondrion. Functionally, may play a role in mitochondrial mRNA editing by facilitating the association of the gRNA-binding (GRBC) complex with the RNA editing core (RECC) complex. However, appears to be dispensable for mRNA editing per se. This chain is REH2-associated factor 2, found in Trypanosoma brucei brucei (strain 927/4 GUTat10.1).